A 123-amino-acid polypeptide reads, in one-letter code: Ribosome-binding factor A (123 aa).

It belongs to the RbfA family. Monomer. Binds 30S ribosomal subunits, but not 50S ribosomal subunits or 70S ribosomes.

It is found in the cytoplasm. In terms of biological role, one of several proteins that assist in the late maturation steps of the functional core of the 30S ribosomal subunit. Associates with free 30S ribosomal subunits (but not with 30S subunits that are part of 70S ribosomes or polysomes). Required for efficient processing of 16S rRNA. May interact with the 5'-terminal helix region of 16S rRNA. This chain is Ribosome-binding factor A, found in Magnetococcus marinus (strain ATCC BAA-1437 / JCM 17883 / MC-1).